The chain runs to 377 residues: N-acetyldiaminopimelate deacetylase (377 aa).

Residue D69 is part of the active site. The active-site Proton acceptor is the E128.

It belongs to the peptidase M20A family. N-acetyldiaminopimelate deacetylase subfamily.

It carries out the reaction N-acetyl-(2S,6S)-2,6-diaminopimelate + H2O = (2S,6S)-2,6-diaminopimelate + acetate. It functions in the pathway amino-acid biosynthesis; L-lysine biosynthesis via DAP pathway; LL-2,6-diaminopimelate from (S)-tetrahydrodipicolinate (acetylase route): step 3/3. Its function is as follows. Catalyzes the conversion of N-acetyl-diaminopimelate to diaminopimelate and acetate. The sequence is that of N-acetyldiaminopimelate deacetylase from Streptococcus sanguinis (strain SK36).